The following is a 288-amino-acid chain: Elongation factor Ts (288 aa).

The segment at 82 to 85 is involved in Mg(2+) ion dislocation from EF-Tu; it reads TDFV.

This sequence belongs to the EF-Ts family.

The protein localises to the cytoplasm. Functionally, associates with the EF-Tu.GDP complex and induces the exchange of GDP to GTP. It remains bound to the aminoacyl-tRNA.EF-Tu.GTP complex up to the GTP hydrolysis stage on the ribosome. The chain is Elongation factor Ts from Chlorobium limicola (strain DSM 245 / NBRC 103803 / 6330).